Reading from the N-terminus, the 407-residue chain is Substance-P receptor (407 aa).

The Extracellular segment spans residues 1 to 31; it reads MDNVLPGDSDLFPNISTNSSESNQFVQPAWQ. Residues asparagine 14 and asparagine 18 are each glycosylated (N-linked (GlcNAc...) asparagine). Residues 32–54 form a helical membrane-spanning segment; the sequence is IVLWAAAYTVIVVTSVVGNVVVM. The Cytoplasmic segment spans residues 55–64; that stretch reads WIILAHKRMR. The helical transmembrane segment at 65–86 threads the bilayer; it reads TVTNYFLVNLAFAEASMAAFNT. Over 87–106 the chain is Extracellular; the sequence is VVNFTYAVHNEWYYGLFYCK. N-linked (GlcNAc...) asparagine glycosylation occurs at asparagine 89. A disulfide bridge connects residues cysteine 105 and cysteine 180. A helical membrane pass occupies residues 107-128; that stretch reads FHNFFPIAAVFASIYSMTAVAF. Residues 129–148 are Cytoplasmic-facing; that stretch reads DRYMAIIHPLQPRLSATATK. Residues 149–169 form a helical membrane-spanning segment; sequence VVIFVIWVLALLLAFPQGYYS. The Extracellular segment spans residues 170–194; it reads TTETMPGRVVCMIEWPEHPNRTYEK. A glycan (N-linked (GlcNAc...) asparagine) is linked at asparagine 189. A helical transmembrane segment spans residues 195-219; the sequence is AYHICVTVLIYFLPLLVIGYAYTVV. The Cytoplasmic portion of the chain corresponds to 220–248; sequence GITLWASEIPGDSSDRYHEQVSAKRKVVK. The chain crosses the membrane as a helical span at residues 249–270; it reads MMIVVVCTFAICWLPFHVFFLL. The Extracellular portion of the chain corresponds to 271 to 283; sequence PYINPDLYVKKFI. Residues 284–308 form a helical membrane-spanning segment; it reads QQVYLAIMWLAMSSTMYNPIIYCCL. Topologically, residues 309-407 are cytoplasmic; that stretch reads NDRFRLGFKH…SSSFYSNMLA (99 aa). Cysteine 322 carries the S-palmitoyl cysteine lipid modification. The segment at 365–407 is disordered; the sequence is HEDEAEEGPKATPSSLDLTSNGSSRSNSKTMTESSSFYSNMLA. The span at 376–407 shows a compositional bias: polar residues; sequence TPSSLDLTSNGSSRSNSKTMTESSSFYSNMLA.

Belongs to the G-protein coupled receptor 1 family. In terms of assembly, interacts with ARRB1.

The protein localises to the cell membrane. This is a receptor for the tachykinin neuropeptide substance P. It is probably associated with G proteins that activate a phosphatidylinositol-calcium second messenger system. The protein is Substance-P receptor (TACR1) of Meriones unguiculatus (Mongolian jird).